The chain runs to 341 residues: MRLEQPRNSLKRSTLDLIERVNRDEYPSLPQDSKCKDALVSAFRKTANFKKYNRPDVNSREQLISPSLTEEDLLGRIRQRYKEKIFAGGQEKFADQSFIAEQIASTYEDFKDNPTLPAYCGEMTYLLYYHLREEGIKPENMLVVGFSANAEDHVLLMYSSDEGFLEQIKNDYFEQEEEGEEAESYKNFIELCARRDKNQTLLLLDPWSQDNKILDLNQLDRDESTNEVIEDYFKNKREALEEGFQPHAIIDGVLEESRVSKATGSVINMETLSFQVDAFKPEELMEIDEENTSDSSEEGTSKNRFRDTLFSNVPDSSSDSENEQEREKKELAGKTPSFRLC.

Residues 287-297 (IDEENTSDSSE) are compositionally biased toward acidic residues. The tract at residues 287-341 (IDEENTSDSSEEGTSKNRFRDTLFSNVPDSSSDSENEQEREKKELAGKTPSFRLC) is disordered. The span at 323–332 (EQEREKKELA) shows a compositional bias: basic and acidic residues.

The protein localises to the cytoplasm. Its function is as follows. May be involved in the pathogenesis of acute Q fever. In Coxiella burnetii (strain RSA 493 / Nine Mile phase I), this protein is Protein CbhE (cbhE).